The sequence spans 179 residues: Adenine phosphoribosyltransferase (179 aa).

It belongs to the purine/pyrimidine phosphoribosyltransferase family. As to quaternary structure, homodimer.

The protein resides in the cytoplasm. The catalysed reaction is AMP + diphosphate = 5-phospho-alpha-D-ribose 1-diphosphate + adenine. It participates in purine metabolism; AMP biosynthesis via salvage pathway; AMP from adenine: step 1/1. Catalyzes a salvage reaction resulting in the formation of AMP, that is energically less costly than de novo synthesis. The polypeptide is Adenine phosphoribosyltransferase (Bradyrhizobium sp. (strain ORS 278)).